The primary structure comprises 333 residues: Biotin synthase (333 aa).

In terms of domain architecture, Radical SAM core spans 54 to 283 (FCSNTFDMCS…RAFIRLAGGR (230 aa)). Residues C72, C76, and C79 each coordinate [4Fe-4S] cluster. [2Fe-2S] cluster-binding residues include S116, C148, C208, and R278.

The protein belongs to the radical SAM superfamily. Biotin synthase family. Homodimer. The cofactor is [4Fe-4S] cluster. [2Fe-2S] cluster serves as cofactor.

The enzyme catalyses (4R,5S)-dethiobiotin + (sulfur carrier)-SH + 2 reduced [2Fe-2S]-[ferredoxin] + 2 S-adenosyl-L-methionine = (sulfur carrier)-H + biotin + 2 5'-deoxyadenosine + 2 L-methionine + 2 oxidized [2Fe-2S]-[ferredoxin]. Its pathway is cofactor biosynthesis; biotin biosynthesis; biotin from 7,8-diaminononanoate: step 2/2. Its function is as follows. Catalyzes the conversion of dethiobiotin (DTB) to biotin by the insertion of a sulfur atom into dethiobiotin via a radical-based mechanism. The sequence is that of Biotin synthase from Brachyspira hyodysenteriae (strain ATCC 49526 / WA1).